A 348-amino-acid chain; its full sequence is WW domain binding protein 1-like (348 aa).

The helical transmembrane segment at 42-62 (LWWFWLVWTVVIILSCCCVCH) threads the bilayer. 2 disordered regions span residues 111–253 (VVNR…RRFT) and 306–348 (CLSS…GSPS). Residues 134-155 (LPPPPQGGPPGGSPPGADPPPQ) are compositionally biased toward pro residues. Residues 156–177 (GSQGAQSSPLSGPSRSSTRPPS) show a composition bias toward low complexity. Ser177 bears the Phosphoserine mark. The segment covering 220–234 (SECKEELLKDSRSER) has biased composition (basic and acidic residues). Residues 331-348 (NTINEQDSPNSQHSGSPS) are compositionally biased toward polar residues.

Its subcellular location is the membrane. The sequence is that of WW domain binding protein 1-like (Wbp1l) from Mus musculus (Mouse).